Here is an 87-residue protein sequence, read N- to C-terminus: Cell division topological specificity factor (87 aa).

The protein belongs to the MinE family.

Its function is as follows. Prevents the cell division inhibition by proteins MinC and MinD at internal division sites while permitting inhibition at polar sites. This ensures cell division at the proper site by restricting the formation of a division septum at the midpoint of the long axis of the cell. In Roseiflexus sp. (strain RS-1), this protein is Cell division topological specificity factor.